A 354-amino-acid chain; its full sequence is Uroporphyrinogen decarboxylase (354 aa).

Residues 27-31 (RQAGR), Asp-77, Tyr-154, Thr-209, and His-327 contribute to the substrate site.

It belongs to the uroporphyrinogen decarboxylase family. Homodimer.

It localises to the cytoplasm. It catalyses the reaction uroporphyrinogen III + 4 H(+) = coproporphyrinogen III + 4 CO2. Its pathway is porphyrin-containing compound metabolism; protoporphyrin-IX biosynthesis; coproporphyrinogen-III from 5-aminolevulinate: step 4/4. Catalyzes the decarboxylation of four acetate groups of uroporphyrinogen-III to yield coproporphyrinogen-III. The sequence is that of Uroporphyrinogen decarboxylase from Serratia proteamaculans (strain 568).